The following is a 125-amino-acid chain: uncharacterized protein (125 aa).

3 helical membrane passes run 20–42 (RNGG…LTIL), 57–76 (LMNA…GVVV), and 81–103 (YLFV…YMAS).

It localises to the cell membrane. This is an uncharacterized protein from Archaeoglobus fulgidus (strain ATCC 49558 / DSM 4304 / JCM 9628 / NBRC 100126 / VC-16).